The following is a 291-amino-acid chain: Phytanoyl-CoA dioxygenase domain-containing protein 1 (291 aa).

At Thr-55 the chain carries Phosphothreonine. 2-oxoglutarate-binding positions include Lys-102, Met-141, His-156–Asp-158, and Trp-174. The Fe cation site is built by His-156 and Asp-158. Residue His-246 coordinates Fe cation. 2-oxoglutarate is bound by residues Ser-248 and Arg-257.

Belongs to the PhyH family. PHYHD1 subfamily. Requires Fe cation as cofactor.

Its activity is regulated as follows. Activity is increased by ascorbate. Inhibited by myristoyl-CoA. 2-oxoglutarate(2OG)-dependent dioxygenase that catalyzes the conversion of 2-oxoglutarate to succinate and CO(2) in an iron-dependent manner. However, does not couple 2OG turnover to the hydroxylation of acyl-coenzyme A derivatives, implying that it is not directly involved in phytanoyl coenzyme-A metabolism. Does not show detectable activity towards fatty acid CoA thioesters. In terms of biological role, isoform 2 probably lacks enzyme activity. Functionally, isoform 3 probably lacks enzyme activity. The sequence is that of Phytanoyl-CoA dioxygenase domain-containing protein 1 from Homo sapiens (Human).